We begin with the raw amino-acid sequence, 375 residues long: Chaperone protein DnaJ (375 aa).

The region spanning D6–G71 is the J domain. The segment at G132–Q214 adopts a CR-type zinc-finger fold. 8 residues coordinate Zn(2+): C145, C148, C162, C165, C188, C191, C202, and C205. CXXCXGXG motif repeat units follow at residues C145–G152, C162–G169, C188–G195, and C202–G209. The interval P222–G243 is disordered.

It belongs to the DnaJ family. Homodimer. The cofactor is Zn(2+).

The protein resides in the cytoplasm. Participates actively in the response to hyperosmotic and heat shock by preventing the aggregation of stress-denatured proteins and by disaggregating proteins, also in an autonomous, DnaK-independent fashion. Unfolded proteins bind initially to DnaJ; upon interaction with the DnaJ-bound protein, DnaK hydrolyzes its bound ATP, resulting in the formation of a stable complex. GrpE releases ADP from DnaK; ATP binding to DnaK triggers the release of the substrate protein, thus completing the reaction cycle. Several rounds of ATP-dependent interactions between DnaJ, DnaK and GrpE are required for fully efficient folding. Also involved, together with DnaK and GrpE, in the DNA replication of plasmids through activation of initiation proteins. The sequence is that of Chaperone protein DnaJ from Halothermothrix orenii (strain H 168 / OCM 544 / DSM 9562).